The sequence spans 212 residues: Large ribosomal subunit protein uL1 (212 aa).

The protein belongs to the universal ribosomal protein uL1 family. Part of the 50S ribosomal subunit.

Functionally, binds directly to 23S rRNA. Probably involved in E site tRNA release. In terms of biological role, protein L1 is also a translational repressor protein, it controls the translation of its operon by binding to its mRNA. This Haloferax volcanii (strain ATCC 29605 / DSM 3757 / JCM 8879 / NBRC 14742 / NCIMB 2012 / VKM B-1768 / DS2) (Halobacterium volcanii) protein is Large ribosomal subunit protein uL1.